A 290-amino-acid chain; its full sequence is Ubiquinone biosynthesis protein COQ4, mitochondrial (290 aa).

Residues 1–32 (MAKRVCVGDLRKLAGSVSTPSRCILPPHARCF) constitute a mitochondrion transit peptide. Residues histidine 168, aspartate 169, histidine 172, and glutamate 184 each coordinate Zn(2+). A disordered region spans residues 260–290 (KPPDLREMRKAEREAQKKDKEAKETMTRAAV).

Belongs to the COQ4 family. Component of a multi-subunit COQ enzyme complex, composed of at least COQ3, COQ4, COQ5, COQ6, COQ7 and COQ9. Requires Zn(2+) as cofactor.

It localises to the mitochondrion inner membrane. The enzyme catalyses a 4-hydroxy-3-methoxy-5-(all-trans-polyprenyl)benzoate + H(+) = a 2-methoxy-6-(all-trans-polyprenyl)phenol + CO2. The protein operates within cofactor biosynthesis; ubiquinone biosynthesis. Its function is as follows. Lyase that catalyzes the C1-decarboxylation of 4-hydroxy-3-methoxy-5-(all-trans-polyprenyl)benzoic acid into 2-methoxy-6-(all-trans-polyprenyl)phenol during ubiquinone biosynthesis. The protein is Ubiquinone biosynthesis protein COQ4, mitochondrial of Phaeosphaeria nodorum (strain SN15 / ATCC MYA-4574 / FGSC 10173) (Glume blotch fungus).